The primary structure comprises 104 residues: Large ribosomal subunit protein uL24 (104 aa).

This sequence belongs to the universal ribosomal protein uL24 family. Part of the 50S ribosomal subunit.

Functionally, one of two assembly initiator proteins, it binds directly to the 5'-end of the 23S rRNA, where it nucleates assembly of the 50S subunit. Its function is as follows. One of the proteins that surrounds the polypeptide exit tunnel on the outside of the subunit. This is Large ribosomal subunit protein uL24 from Nitrobacter hamburgensis (strain DSM 10229 / NCIMB 13809 / X14).